The following is a 448-amino-acid chain: Asparagine--tRNA ligase (448 aa).

This sequence belongs to the class-II aminoacyl-tRNA synthetase family. In terms of assembly, homodimer.

The protein localises to the cytoplasm. It carries out the reaction tRNA(Asn) + L-asparagine + ATP = L-asparaginyl-tRNA(Asn) + AMP + diphosphate + H(+). The polypeptide is Asparagine--tRNA ligase (Streptococcus pyogenes serotype M4 (strain MGAS10750)).